The chain runs to 344 residues: Uroporphyrinogen decarboxylase (344 aa).

Residues 26–30 (RQAGR), F45, D75, Y151, S206, and H320 contribute to the substrate site.

Belongs to the uroporphyrinogen decarboxylase family. As to quaternary structure, homodimer.

Its subcellular location is the cytoplasm. It catalyses the reaction uroporphyrinogen III + 4 H(+) = coproporphyrinogen III + 4 CO2. It participates in porphyrin-containing compound metabolism; protoporphyrin-IX biosynthesis; coproporphyrinogen-III from 5-aminolevulinate: step 4/4. Its function is as follows. Catalyzes the decarboxylation of four acetate groups of uroporphyrinogen-III to yield coproporphyrinogen-III. This chain is Uroporphyrinogen decarboxylase, found in Staphylococcus haemolyticus (strain JCSC1435).